The following is a 242-amino-acid chain: Uridylate kinase (242 aa).

8–11 contributes to the ATP binding site; the sequence is KFSG. Glycine 50 serves as a coordination point for UMP. ATP is bound by residues glycine 51 and arginine 55. UMP is bound by residues aspartate 71 and 132–139; that span reads TGNPFFTT. Residues threonine 159, tyrosine 165, and aspartate 168 each contribute to the ATP site.

This sequence belongs to the UMP kinase family. Homohexamer.

Its subcellular location is the cytoplasm. The catalysed reaction is UMP + ATP = UDP + ADP. Its pathway is pyrimidine metabolism; CTP biosynthesis via de novo pathway; UDP from UMP (UMPK route): step 1/1. Inhibited by UTP. In terms of biological role, catalyzes the reversible phosphorylation of UMP to UDP. In Nitratiruptor sp. (strain SB155-2), this protein is Uridylate kinase.